The primary structure comprises 281 residues: Aliphatic sulfonates import ATP-binding protein SsuB (281 aa).

An ABC transporter domain is found at 40–263; the sequence is LTLRNLRKSF…RRGSADLAAL (224 aa). An ATP-binding site is contributed by 72-79; that stretch reads GRSGCGKS.

The protein belongs to the ABC transporter superfamily. Aliphatic sulfonates importer (TC 3.A.1.17.2) family. The complex is composed of two ATP-binding proteins (SsuB), two transmembrane proteins (SsuC) and a solute-binding protein (SsuA).

It localises to the cell inner membrane. It catalyses the reaction ATP + H2O + aliphatic sulfonate-[sulfonate-binding protein]Side 1 = ADP + phosphate + aliphatic sulfonateSide 2 + [sulfonate-binding protein]Side 1.. In terms of biological role, part of the ABC transporter complex SsuABC involved in aliphatic sulfonates import. Responsible for energy coupling to the transport system. The sequence is that of Aliphatic sulfonates import ATP-binding protein SsuB from Rhodopseudomonas palustris (strain BisA53).